A 116-amino-acid chain; its full sequence is Nucleoid-associated protein P9215_00191 (116 aa).

This sequence belongs to the YbaB/EbfC family. Homodimer.

Its subcellular location is the cytoplasm. The protein localises to the nucleoid. Its function is as follows. Binds to DNA and alters its conformation. May be involved in regulation of gene expression, nucleoid organization and DNA protection. The sequence is that of Nucleoid-associated protein P9215_00191 from Prochlorococcus marinus (strain MIT 9215).